A 147-amino-acid chain; its full sequence is UPF0306 protein YhbP (147 aa).

It belongs to the UPF0306 family.

The chain is UPF0306 protein YhbP from Escherichia coli O6:K15:H31 (strain 536 / UPEC).